A 413-amino-acid polypeptide reads, in one-letter code: Multifunctional CCA protein (413 aa).

Glycine 8 and arginine 11 together coordinate ATP. CTP-binding residues include glycine 8 and arginine 11. Residues glutamate 21 and aspartate 23 each contribute to the Mg(2+) site. ATP-binding residues include arginine 91, arginine 137, and arginine 140. CTP contacts are provided by arginine 91, arginine 137, and arginine 140. The region spanning 228–329 (TGEHTLLALA…LKLLEGLDLF (102 aa)) is the HD domain.

It belongs to the tRNA nucleotidyltransferase/poly(A) polymerase family. Bacterial CCA-adding enzyme type 1 subfamily. In terms of assembly, monomer. Can also form homodimers and oligomers. Mg(2+) is required as a cofactor. Ni(2+) serves as cofactor.

The enzyme catalyses a tRNA precursor + 2 CTP + ATP = a tRNA with a 3' CCA end + 3 diphosphate. The catalysed reaction is a tRNA with a 3' CCA end + 2 CTP + ATP = a tRNA with a 3' CCACCA end + 3 diphosphate. Catalyzes the addition and repair of the essential 3'-terminal CCA sequence in tRNAs without using a nucleic acid template. Adds these three nucleotides in the order of C, C, and A to the tRNA nucleotide-73, using CTP and ATP as substrates and producing inorganic pyrophosphate. tRNA 3'-terminal CCA addition is required both for tRNA processing and repair. Also involved in tRNA surveillance by mediating tandem CCA addition to generate a CCACCA at the 3' terminus of unstable tRNAs. While stable tRNAs receive only 3'-terminal CCA, unstable tRNAs are marked with CCACCA and rapidly degraded. This chain is Multifunctional CCA protein, found in Alkalilimnicola ehrlichii (strain ATCC BAA-1101 / DSM 17681 / MLHE-1).